The sequence spans 358 residues: Glycerophosphodiester phosphodiesterase, periplasmic (358 aa).

The first 25 residues, 1–25, serve as a signal peptide directing secretion; that stretch reads MKLTLKNLSMAIMMSTIVMGSSAMA. Residues 31–355 enclose the GP-PDE domain; it reads KIVIAHRGAS…DFPDKAVKFL (325 aa). Catalysis depends on His36, which acts as the Proton acceptor. 2 residues coordinate Ca(2+): Glu63 and Asp65. His78 (proton donor) is an active-site residue. Position 171 (Glu171) interacts with Ca(2+).

Belongs to the glycerophosphoryl diester phosphodiesterase family. As to quaternary structure, homodimer. Ca(2+) serves as cofactor.

The protein localises to the periplasm. It catalyses the reaction a sn-glycero-3-phosphodiester + H2O = an alcohol + sn-glycerol 3-phosphate + H(+). In terms of biological role, glycerophosphodiester phosphodiesterase hydrolyzes glycerophosphodiesters into glycerol-3-phosphate (G3P) and the corresponding alcohol. This Escherichia coli (strain K12) protein is Glycerophosphodiester phosphodiesterase, periplasmic (glpQ).